Here is a 263-residue protein sequence, read N- to C-terminus: MARFLGLCTWLLALGPGLLATVRAECSQDCATCSYRLARPTDLNPLACTLECEGKLPSLKTWETCKELLQLTKLELPPDATSALSKQEESHLLAKKYGGFMKRYGGFMKKMDELYPLEVEEEANGGEVLGKRYGGFMKKDAEEDDGLGNSSNLLKELLGAGDQREGSLHQEGSDAEDVSKRYGGFMRGLKRSPHLEDETKELQKRYGGFMRRVGRPEWWMDYQKRYGGFLKRFAEPLPSEEEGESYSKEVPEMEKRYGGFMRF.

An N-terminal signal peptide occupies residues Met-1–Ala-24. 3 disulfide bridges follow: Cys-26/Cys-48, Cys-30/Cys-52, and Cys-33/Cys-65. Propeptides lie at residues Ser-192–Gln-203 and Val-213–Gln-223. Position 247 is a phosphoserine (Ser-247).

Belongs to the opioid neuropeptide precursor family. Post-translationally, proenkephalin-A is cleaved by CTSL to generate Met-enkephalin. In terms of processing, processed and degraded by ACE. Probably cleaved by ACE. Post-translationally, processed by ACE to generate Met-enkephalin in the nucleus accumbens of the brain. In terms of processing, the N-terminal domain contains 6 conserved cysteines thought to be involved in disulfide bonding and/or processing. Secreted by neuroendocrine chromaffin cells through cromaffin granules.

It is found in the cytoplasmic vesicle. The protein resides in the secretory vesicle. It localises to the chromaffin granule lumen. The protein localises to the secreted. In terms of biological role, neuropeptide that competes with and mimic the effects of opiate drugs. They play a role in a number of physiologic functions, including pain perception and responses to stress. Its function is as follows. Met-enkephalin-Arg-Phe neuropeptide acts as a strong ligand of Mu-type opioid receptor OPRM1. Met-enkephalin-Arg-Phe-binding to OPRM1 in the nucleus accumbens of the brain increases activation of OPRM1, leading to long-term synaptic depression of glutamate release. Increases glutamate release in the striatum and decreases GABA concentration in the striatum. Functionally, increases glutamate release in the striatum. In terms of biological role, enkelytin possesses antibacterial activity against Gram-positive bacteria such as Micrococcus luteus and Bacillus megaterium. The protein is Proenkephalin-A (PENK) of Bos taurus (Bovine).